We begin with the raw amino-acid sequence, 78 residues long: Large ribosomal subunit protein bL28 (78 aa).

Positions 1-21 are disordered; it reads MSKVCQVTGKRPITGHNVSHA.

This sequence belongs to the bacterial ribosomal protein bL28 family.

The polypeptide is Large ribosomal subunit protein bL28 (Cellvibrio japonicus (strain Ueda107) (Pseudomonas fluorescens subsp. cellulosa)).